Reading from the N-terminus, the 265-residue chain is 4-hydroxy-tetrahydrodipicolinate reductase (265 aa).

16–21 lines the NAD(+) pocket; the sequence is GANGKM. Arg43 is a binding site for NADP(+). NAD(+) contacts are provided by residues 106–108 and 130–133; these read GTT and SENF. His164 serves as the catalytic Proton donor/acceptor. A (S)-2,3,4,5-tetrahydrodipicolinate-binding site is contributed by His165. Residue Lys168 is the Proton donor of the active site. 174–175 contacts (S)-2,3,4,5-tetrahydrodipicolinate; it reads AT.

This sequence belongs to the DapB family. As to quaternary structure, homotetramer.

The protein resides in the cytoplasm. It carries out the reaction (S)-2,3,4,5-tetrahydrodipicolinate + NAD(+) + H2O = (2S,4S)-4-hydroxy-2,3,4,5-tetrahydrodipicolinate + NADH + H(+). The enzyme catalyses (S)-2,3,4,5-tetrahydrodipicolinate + NADP(+) + H2O = (2S,4S)-4-hydroxy-2,3,4,5-tetrahydrodipicolinate + NADPH + H(+). Its pathway is amino-acid biosynthesis; L-lysine biosynthesis via DAP pathway; (S)-tetrahydrodipicolinate from L-aspartate: step 4/4. Catalyzes the conversion of 4-hydroxy-tetrahydrodipicolinate (HTPA) to tetrahydrodipicolinate. In Wigglesworthia glossinidia brevipalpis, this protein is 4-hydroxy-tetrahydrodipicolinate reductase.